The following is a 94-amino-acid chain: Integration host factor subunit beta (94 aa).

It belongs to the bacterial histone-like protein family. Heterodimer of an alpha and a beta chain.

Its function is as follows. This protein is one of the two subunits of integration host factor, a specific DNA-binding protein that functions in genetic recombination as well as in transcriptional and translational control. This chain is Integration host factor subunit beta, found in Roseobacter denitrificans (strain ATCC 33942 / OCh 114) (Erythrobacter sp. (strain OCh 114)).